The chain runs to 1256 residues: Centrosome and spindle pole-associated protein 1 (1256 aa).

Coiled coils occupy residues 38–62 (ADNL…LESD) and 114–135 (EDYE…RRYL). Positions 189-208 (GKEESSEKFRQVEKSTEPKS) are enriched in basic and acidic residues. Disordered regions lie at residues 189 to 244 (GKEE…LTPS) and 381 to 403 (AENK…CSPF). Polar residues predominate over residues 222–232 (LTSQIQTSCEN). At Ser-244 the chain carries Phosphoserine. The stretch at 244–270 (SEAYEELLNQRRLEEDRYRQLDDEIEL) forms a coiled coil. Residues 417-449 (QRRKEKYRLELLEQMAEQQRNKRREKDLELRVA) adopt a coiled-coil conformation. Residues Ser-459 and Ser-527 each carry the phosphoserine modification. A coiled-coil region spans residues 625 to 669 (SKQSLQSYQEALQQQIREREERRKKEREEKEEYEAKLEAEMRTYN). 2 disordered regions span residues 735–757 (ANKS…VFGE) and 813–853 (EYEE…KKEE). Over residues 736 to 748 (NKSSGHMQTQSSP) the composition is skewed to polar residues. Ser-901 and Ser-920 each carry phosphoserine. Residues 913 to 932 (SSMSRAQSPPVPARKNQLRA) form a disordered region. The stretch at 925–964 (ARKNQLRAEEEKKNVIMELSEMRKQLRSEERRLQERLLHM) forms a coiled coil. Position 966 is a phosphoserine (Ser-966). 2 disordered regions span residues 1114–1147 (EDDV…RPNV) and 1232–1256 (LNQE…TAHG). Polar residues predominate over residues 1246–1256 (FTWQGLSTAHG).

In terms of assembly, interacts with PLEKHG6. Interacts with ARMC9, TOGARAM1, CCDC66, CEP104 and CEP290. Phosphorylated. Phosphorylation increases in colcemide-treated cells. In terms of tissue distribution, expressed in adult and fetal brain with enrichment in the cerebellum. Detected in testis.

It is found in the cytoplasm. Its subcellular location is the cytoskeleton. It localises to the microtubule organizing center. The protein resides in the centrosome. The protein localises to the spindle. It is found in the spindle pole. Its subcellular location is the cell projection. It localises to the cilium. Its function is as follows. May play a role in cell-cycle-dependent microtubule organization. The protein is Centrosome and spindle pole-associated protein 1 (CSPP1) of Homo sapiens (Human).